A 617-amino-acid chain; its full sequence is Chaperone protein HscA homolog (617 aa).

A disordered region spans residues 1–23 (MALLQIAEPGQSSAPHEHKRAAG).

The protein belongs to the heat shock protein 70 family.

Chaperone involved in the maturation of iron-sulfur cluster-containing proteins. Has a low intrinsic ATPase activity which is markedly stimulated by HscB. This Vibrio vulnificus (strain YJ016) protein is Chaperone protein HscA homolog.